We begin with the raw amino-acid sequence, 237 residues long: Ribosomal RNA small subunit methyltransferase G (237 aa).

Residues Gly-78, Phe-83, 129-130, and Arg-148 contribute to the S-adenosyl-L-methionine site; that span reads AE.

Belongs to the methyltransferase superfamily. RNA methyltransferase RsmG family.

The protein resides in the cytoplasm. Specifically methylates the N7 position of a guanine in 16S rRNA. This Streptococcus pyogenes serotype M12 (strain MGAS2096) protein is Ribosomal RNA small subunit methyltransferase G.